Here is a 642-residue protein sequence, read N- to C-terminus: Threonine--tRNA ligase (642 aa).

Positions 1-61 constitute a TGS domain; that stretch reads MPVITLPDGS…ETDAELSIIT (61 aa). The tract at residues 243 to 534 is catalytic; the sequence is DHRKIGKQLD…LIEEYAGRFP (292 aa). C334, H385, and H511 together coordinate Zn(2+).

It belongs to the class-II aminoacyl-tRNA synthetase family. In terms of assembly, homodimer. It depends on Zn(2+) as a cofactor.

Its subcellular location is the cytoplasm. It carries out the reaction tRNA(Thr) + L-threonine + ATP = L-threonyl-tRNA(Thr) + AMP + diphosphate + H(+). Its function is as follows. Catalyzes the attachment of threonine to tRNA(Thr) in a two-step reaction: L-threonine is first activated by ATP to form Thr-AMP and then transferred to the acceptor end of tRNA(Thr). Also edits incorrectly charged L-seryl-tRNA(Thr). This chain is Threonine--tRNA ligase, found in Shewanella oneidensis (strain ATCC 700550 / JCM 31522 / CIP 106686 / LMG 19005 / NCIMB 14063 / MR-1).